Here is a 712-residue protein sequence, read N- to C-terminus: Eukaryotic peptide chain release factor GTP-binding subunit (712 aa).

Positions 1-23 are enriched in polar residues; it reads MSNPQDQLSNDLANASISGDQSK. Disordered stretches follow at residues 1–64, 76–115, 132–162, and 184–256; these read MSNP…QYGG, GYQQNYNNRGGYQQNYNNRGGYQQNYNNRGGYQQQQQQQY, PQQQQQQQTQSQGMSLADFQKQKAEQQASLN, and TKKV…APVS. A several sort of repeats region spans residues 16 to 143; the sequence is SISGDQSKQP…QQQQQQTQSQ (128 aa). Low complexity-rich tracts occupy residues 24-35 and 48-64; these read QPQQQQPQQQQP and TGGYQQFQPQQQQQYGG. Composition is skewed to low complexity over residues 132 to 141 and 190 to 201; these read PQQQQQQQTQ and AKPAASKEASPA. The tract at residues 144 to 282 is charged; it reads GMSLADFQKQ…DEVDEEVVKD (139 aa). A compositionally biased stretch (basic and acidic residues) spans 202–217; it reads PKDEEASAEPEAKKES. Residues 218 to 256 are compositionally biased toward low complexity; the sequence is TPVPASSSPAPAAADSTPAPVKKESTPTPSVASKSAPVS. The tr-type G domain occupies 287-512; it reads KDHVSIIFMG…YLDNMDTMNR (226 aa). The G1 stretch occupies residues 296-303; sequence GHVDAGKS. A GTP-binding site is contributed by 296–303; sequence GHVDAGKS. The tract at residues 352–356 is G2; the sequence is GKTIE. Thr-370 carries the phosphothreonine modification. Residues 373–376 form a G3 region; it reads DAPG. GTP-binding positions include 373–377 and 435–438; these read DAPGH and NKMD. Positions 435–438 are G4; the sequence is NKMD. The tract at residues 476–478 is G5; the sequence is SGY.

It belongs to the TRAFAC class translation factor GTPase superfamily. Classic translation factor GTPase family. ERF3 subfamily.

The protein localises to the cytoplasm. Functionally, involved in translation termination. Stimulates the activity of ERF1. Binds guanine nucleotides. The sequence is that of Eukaryotic peptide chain release factor GTP-binding subunit (SUP35) from Candida maltosa (Yeast).